Here is a 490-residue protein sequence, read N- to C-terminus: Betaine aldehyde dehydrogenase (490 aa).

The K(+) site is built by Thr26, Ile27, and Asp93. 150–152 (GAW) provides a ligand contact to NAD(+). Catalysis depends on Lys162, which acts as the Charge relay system. 176–179 (KPSE) serves as a coordination point for NAD(+). Position 180 (Val180) interacts with K(+). NAD(+) is bound at residue 230–233 (GVAS). Residue Leu246 participates in K(+) binding. The active-site Proton acceptor is the Glu252. The NAD(+) site is built by Gly254, Cys286, and Glu387. The Nucleophile role is filled by Cys286. Cys286 is subject to Cysteine sulfenic acid (-SOH). 2 residues coordinate K(+): Lys457 and Gly460. Residue Glu464 is the Charge relay system of the active site.

Belongs to the aldehyde dehydrogenase family. Dimer of dimers. K(+) is required as a cofactor.

The enzyme catalyses betaine aldehyde + NAD(+) + H2O = glycine betaine + NADH + 2 H(+). The protein operates within amine and polyamine biosynthesis; betaine biosynthesis via choline pathway; betaine from betaine aldehyde: step 1/1. Involved in the biosynthesis of the osmoprotectant glycine betaine. Catalyzes the irreversible oxidation of betaine aldehyde to the corresponding acid. The chain is Betaine aldehyde dehydrogenase from Escherichia coli (strain K12 / DH10B).